Consider the following 711-residue polypeptide: Polyribonucleotide nucleotidyltransferase (711 aa).

Mg(2+) contacts are provided by D486 and D492. Residues 553–612 enclose the KH domain; the sequence is PRIHTIKINPDKIKDVIGKGGSVIRALTEETGTTIEIEDDGTVKIAATDGEKAKHAIRRI. Positions 622-690 constitute an S1 motif domain; the sequence is GRVYTGKVTR…RQGRIRLSIK (69 aa). Positions 689–711 are disordered; that stretch reads IKEATEQSQPAAAPEAPAAEQGE. Positions 694 to 711 are enriched in low complexity; that stretch reads EQSQPAAAPEAPAAEQGE.

The protein belongs to the polyribonucleotide nucleotidyltransferase family. In terms of assembly, component of the RNA degradosome, which is a multiprotein complex involved in RNA processing and mRNA degradation. Requires Mg(2+) as cofactor.

The protein resides in the cytoplasm. The catalysed reaction is RNA(n+1) + phosphate = RNA(n) + a ribonucleoside 5'-diphosphate. In terms of biological role, involved in mRNA degradation. Catalyzes the phosphorolysis of single-stranded polyribonucleotides processively in the 3'- to 5'-direction. The polypeptide is Polyribonucleotide nucleotidyltransferase (Escherichia coli O8 (strain IAI1)).